The chain runs to 386 residues: ATP synthase gamma chain 2, chloroplastic (386 aa).

The segment at 1–22 (MTGSISTSWLLSSPSNSNSASS) is disordered. The transit peptide at 1–60 (MTGSISTSWLLSSPSNSNSASSSESYSFIATLKPVRYYPFQSLTPNRISSRSPLPSIQIR) directs the protein to the chloroplast. Residue cysteine 149 is part of the active site. A disulfide bond links cysteine 260 and cysteine 266.

This sequence belongs to the ATPase gamma chain family. In terms of assembly, F-type ATPases have 2 components, CF(1) - the catalytic core - and CF(0) - the membrane proton channel. CF(1) has five subunits: alpha(3), beta(3), gamma(1), delta(1), epsilon(1). CF(0) has four main subunits: a, b, b' and c.

Its subcellular location is the plastid. It is found in the chloroplast thylakoid membrane. Functionally, produces ATP from ADP in the presence of a proton gradient across the membrane. The gamma chain is believed to be important in regulating ATPase activity and the flow of protons through the CF(0) complex. The protein is ATP synthase gamma chain 2, chloroplastic (ATPC2) of Arabidopsis thaliana (Mouse-ear cress).